Consider the following 229-residue polypeptide: Enolase-phosphatase E1 (229 aa).

A disordered region spans residues 207-229 (RDPASHHPQVQRFDDIHPEQIPA). Residues 218-229 (RFDDIHPEQIPA) show a composition bias toward basic and acidic residues.

The protein belongs to the HAD-like hydrolase superfamily. MasA/MtnC family. In terms of assembly, monomer. Requires Mg(2+) as cofactor.

It catalyses the reaction 5-methylsulfanyl-2,3-dioxopentyl phosphate + H2O = 1,2-dihydroxy-5-(methylsulfanyl)pent-1-en-3-one + phosphate. It participates in amino-acid biosynthesis; L-methionine biosynthesis via salvage pathway; L-methionine from S-methyl-5-thio-alpha-D-ribose 1-phosphate: step 3/6. Its pathway is amino-acid biosynthesis; L-methionine biosynthesis via salvage pathway; L-methionine from S-methyl-5-thio-alpha-D-ribose 1-phosphate: step 4/6. In terms of biological role, bifunctional enzyme that catalyzes the enolization of 2,3-diketo-5-methylthiopentyl-1-phosphate (DK-MTP-1-P) into the intermediate 2-hydroxy-3-keto-5-methylthiopentenyl-1-phosphate (HK-MTPenyl-1-P), which is then dephosphorylated to form the acireductone 1,2-dihydroxy-3-keto-5-methylthiopentene (DHK-MTPene). This Klebsiella pneumoniae subsp. pneumoniae (strain ATCC 700721 / MGH 78578) protein is Enolase-phosphatase E1.